The sequence spans 404 residues: uncharacterized protein (404 aa).

12 helical membrane-spanning segments follow: residues 3–23 (IIAK…PITE), 43–63 (TTQI…LTLG), 73–93 (PVVL…IFAP), 95–115 (IETL…GSVI), 135–155 (SLSP…GYII), 162–182 (YTFV…CKIL), 216–236 (IIGA…FIFI), 248–268 (KLAF…GYLI), 280–300 (ILGL…ALIL), 309–329 (IAVI…NLLI), 346–366 (TAGS…TFLV), and 377–397 (FALL…YILI).

Belongs to the major facilitator superfamily. Bcr/CmlA family.

It is found in the cell inner membrane. This is an uncharacterized protein from Rickettsia bellii (strain RML369-C).